A 273-amino-acid polypeptide reads, in one-letter code: Large ribosomal subunit protein uL2 (273 aa).

Residues 221–263 are disordered; sequence RGTAMNPVDHPHGGGEGRNFGKHPVTPWGVQTKGKKTRHNKRT. Positions 253–263 are enriched in basic residues; it reads KGKKTRHNKRT.

It belongs to the universal ribosomal protein uL2 family. As to quaternary structure, part of the 50S ribosomal subunit. Forms a bridge to the 30S subunit in the 70S ribosome.

Functionally, one of the primary rRNA binding proteins. Required for association of the 30S and 50S subunits to form the 70S ribosome, for tRNA binding and peptide bond formation. It has been suggested to have peptidyltransferase activity; this is somewhat controversial. Makes several contacts with the 16S rRNA in the 70S ribosome. The polypeptide is Large ribosomal subunit protein uL2 (Histophilus somni (strain 2336) (Haemophilus somnus)).